The primary structure comprises 485 residues: Protein disulfide isomerase-like 5-4 (485 aa).

A Thioredoxin domain is found at 114-263 (VPTGSEFHPG…LVAAMETYVA (150 aa)). The Nucleophile role is filled by cysteine 170. The chain crosses the membrane as a helical span at residues 444-464 (FSHFITNVCAIIGGVFTVAGI).

The protein belongs to the protein disulfide isomerase family.

Its subcellular location is the membrane. Functionally, acts as a protein-folding catalyst that interacts with nascent polypeptides to catalyze the formation, isomerization, and reduction or oxidation of disulfide bonds. May play a role in storage protein biogenesis. This is Protein disulfide isomerase-like 5-4 (PDIL5-4) from Oryza sativa subsp. japonica (Rice).